A 525-amino-acid polypeptide reads, in one-letter code: GMP synthase [glutamine-hydrolyzing] (525 aa).

The region spanning 8–207 is the Glutamine amidotransferase type-1 domain; that stretch reads KILILDFGSQ…ALDICGCAAN (200 aa). The active-site Nucleophile is the cysteine 85. Active-site residues include histidine 181 and glutamate 183. The GMPS ATP-PPase domain maps to 208 to 400; it reads WKPSSIIEDA…LGLPYNMLYR (193 aa). 235–241 lines the ATP pocket; it reads SGGVDSS.

As to quaternary structure, homodimer.

The enzyme catalyses XMP + L-glutamine + ATP + H2O = GMP + L-glutamate + AMP + diphosphate + 2 H(+). It functions in the pathway purine metabolism; GMP biosynthesis; GMP from XMP (L-Gln route): step 1/1. Functionally, catalyzes the synthesis of GMP from XMP. The protein is GMP synthase [glutamine-hydrolyzing] of Shewanella sp. (strain ANA-3).